The chain runs to 424 residues: L-glutamine:2-deoxy-scyllo-inosose aminotransferase (424 aa).

Lys202 carries the post-translational modification N6-(pyridoxal phosphate)lysine.

The protein belongs to the DegT/DnrJ/EryC1 family. L-glutamine:2-deoxy-scyllo-inosose/scyllo-inosose aminotransferase subfamily. Pyridoxal 5'-phosphate is required as a cofactor.

The enzyme catalyses 2-deoxy-L-scyllo-inosose + L-glutamine = 2-deoxy-scyllo-inosamine + 2-oxoglutaramate. It catalyses the reaction 3-amino-2,3-dideoxy-scyllo-inosose + L-glutamine = 2-deoxystreptamine + 2-oxoglutaramate. It functions in the pathway metabolic intermediate biosynthesis; 2-deoxystreptamine biosynthesis; 2-deoxystreptamine from D-glucose 6-phosphate: step 2/4. Its pathway is antibiotic biosynthesis; lividomycin biosynthesis. In terms of biological role, catalyzes the PLP-dependent transamination of 2-deoxy-scyllo-inosose (2-DOI) to form 2-deoxy-scyllo-inosamine (2-DOIA) using L-glutamine as the amino donor. Also catalyzes the transamination of 3-amino-2,3-dideoxy-scyllo-inosose (keto-2-DOIA) into 2-deoxystreptamine (2-DOS). The protein is L-glutamine:2-deoxy-scyllo-inosose aminotransferase (livS) of Streptomyces lividus.